Consider the following 477-residue polypeptide: Ribulose bisphosphate carboxylase large chain (477 aa).

A propeptide spanning residues 1–2 (MS) is cleaved from the precursor. P3 carries the N-acetylproline modification. At K14 the chain carries N6,N6,N6-trimethyllysine. Substrate-binding residues include N123 and T173. K175 functions as the Proton acceptor in the catalytic mechanism. K177 is a substrate binding site. Mg(2+) is bound by residues K201, D203, and E204. N6-carboxylysine is present on K201. Catalysis depends on H294, which acts as the Proton acceptor. The substrate site is built by R295, H327, and S379.

Belongs to the RuBisCO large chain family. Type I subfamily. As to quaternary structure, heterohexadecamer of 8 large chains and 8 small chains; disulfide-linked. The disulfide link is formed within the large subunit homodimers. It depends on Mg(2+) as a cofactor. Post-translationally, the disulfide bond which can form in the large chain dimeric partners within the hexadecamer appears to be associated with oxidative stress and protein turnover.

The protein localises to the plastid. Its subcellular location is the chloroplast. The enzyme catalyses 2 (2R)-3-phosphoglycerate + 2 H(+) = D-ribulose 1,5-bisphosphate + CO2 + H2O. The catalysed reaction is D-ribulose 1,5-bisphosphate + O2 = 2-phosphoglycolate + (2R)-3-phosphoglycerate + 2 H(+). Its function is as follows. RuBisCO catalyzes two reactions: the carboxylation of D-ribulose 1,5-bisphosphate, the primary event in carbon dioxide fixation, as well as the oxidative fragmentation of the pentose substrate in the photorespiration process. Both reactions occur simultaneously and in competition at the same active site. The chain is Ribulose bisphosphate carboxylase large chain from Agrostis stolonifera (Creeping bentgrass).